The following is a 367-amino-acid chain: mRNA-decapping enzyme-like protein (367 aa).

3 disordered regions span residues 144–179 (PKAS…RDAP), 196–246 (NTAS…SSSP), and 299–333 (PNNA…PTGP). Positions 196–211 (NTASGSASGPYQSSAI) are enriched in polar residues. Over residues 212-234 (PHQPHQPHQPTIAPPVAAAAPPQ) the composition is skewed to low complexity. Residues 299–309 (PNNASHQQRSY) are compositionally biased toward polar residues. Over residues 315–331 (QPFPPPTPPPSLAPAPT) the composition is skewed to pro residues.

It belongs to the DCP1 family. As to quaternary structure, homodimer. Component of the decapping complex. Interacts with DCP2 and DCP5. Interacts with BCHA1. In terms of tissue distribution, expressed in seedlings, mostly in root tips, root hairs, and the vascular system. Also present in roots, leaves, stems, and flowers.

It is found in the cytoplasm. The protein localises to the P-body. Its function is as follows. As a component of the decapping complex, involved in the degradation of mRNAs. Essential for postembryonic development. In Arabidopsis thaliana (Mouse-ear cress), this protein is mRNA-decapping enzyme-like protein.